A 2145-amino-acid polypeptide reads, in one-letter code: Mediator of RNA polymerase II transcription subunit 12-like protein (2145 aa).

A disordered region spans residues 1–30 (MAAFGLLSYEQRPLKRPRLGPPDVYPQDPK). Residue threonine 462 is modified to Phosphothreonine. The span at 1436–1455 (ELEKGQHLGSSSKKERDRQK) shows a compositional bias: basic and acidic residues. 3 disordered regions span residues 1436-1460 (ELEK…KSMS), 1721-1802 (RSYY…ISSQ), and 2029-2145 (DAVL…PSHF). The segment covering 1768–1777 (TKGRKRKTKS) has biased composition (basic residues). Over residues 2052–2069 (RQPQVRQQQRLLQMQQPQ) the composition is skewed to low complexity. The segment covering 2070-2079 (QPQPQQPPQP) has biased composition (pro residues). Residues 2089 to 2099 (TLGLQAMQPQQ) are compositionally biased toward polar residues. Low complexity predominate over residues 2104–2124 (RQGLQQTQQQQQTAALVRQLQ). Residues 2125 to 2136 (KQLSSNQPQQGV) show a composition bias toward polar residues.

Belongs to the Mediator complex subunit 12 family. As to quaternary structure, may be a component of the Mediator complex, which is known to be composed of MED1, MED4, MED6, MED7, MED8, MED9, MED10, MED11, MED12, MED13, MED13L, MED14, MED15, MED16, MED17, MED18, MED19, MED20, MED21, MED22, MED23, MED24, MED25, MED26, MED27, MED29, MED30, MED31, CCNC, CDK8 and CDC2L6/CDK11. The MED12, MED13, CCNC and CDK8 subunits form a distinct module termed the CDK8 module. Mediator containing the CDK8 module is less active than Mediator lacking this module in supporting transcriptional activation. Individual preparations of the Mediator complex lacking one or more distinct subunits have been variously termed ARC, CRSP, DRIP, PC2, SMCC and TRAP.

Its subcellular location is the nucleus. In terms of biological role, may be a component of the Mediator complex, a coactivator involved in the regulated transcription of nearly all RNA polymerase II-dependent genes. Mediator functions as a bridge to convey information from gene-specific regulatory proteins to the basal RNA polymerase II transcription machinery. Mediator is recruited to promoters by direct interactions with regulatory proteins and serves as a scaffold for the assembly of a functional preinitiation complex with RNA polymerase II and the general transcription factors. This chain is Mediator of RNA polymerase II transcription subunit 12-like protein (MED12L), found in Homo sapiens (Human).